The following is a 127-amino-acid chain: MAAINIVKKRTKPFKRHQSDLFKRVGESWRKPRGIDSCVRRRFRGTISMPKIGYGNNKKTRYCMPNGLKAFLVRNVSDVELLLMHNKTYAAEIASNVSARKRVEIVEKARALGVKVTNAGAKVRSQE.

This sequence belongs to the eukaryotic ribosomal protein eL32 family. In terms of assembly, component of the large ribosomal subunit (LSU). Mature yeast ribosomes consist of a small (40S) and a large (60S) subunit. The 40S small subunit contains 1 molecule of ribosomal RNA (18S rRNA) and at least 33 different proteins. The large 60S subunit contains 3 rRNA molecules (25S, 5.8S and 5S rRNA) and at least 46 different proteins.

Its subcellular location is the cytoplasm. It localises to the nucleus. It is found in the nucleolus. Its function is as follows. Component of the ribosome, a large ribonucleoprotein complex responsible for the synthesis of proteins in the cell. The small ribosomal subunit (SSU) binds messenger RNAs (mRNAs) and translates the encoded message by selecting cognate aminoacyl-transfer RNA (tRNA) molecules. The large subunit (LSU) contains the ribosomal catalytic site termed the peptidyl transferase center (PTC), which catalyzes the formation of peptide bonds, thereby polymerizing the amino acids delivered by tRNAs into a polypeptide chain. The nascent polypeptides leave the ribosome through a tunnel in the LSU and interact with protein factors that function in enzymatic processing, targeting, and the membrane insertion of nascent chains at the exit of the ribosomal tunnel. This chain is Large ribosomal subunit protein eL32B (rpl3201), found in Schizosaccharomyces pombe (strain 972 / ATCC 24843) (Fission yeast).